A 126-amino-acid chain; its full sequence is Fluoride-specific ion channel FluC 2 (126 aa).

The next 4 membrane-spanning stretches (helical) occupy residues 7–27 (MWVG…GLSI), 37–57 (LGTF…SILF), 65–85 (YGDL…TTFS), and 101–121 (AIAA…AAFG). Residues Gly79 and Thr82 each contribute to the Na(+) site.

Belongs to the fluoride channel Fluc/FEX (TC 1.A.43) family.

The protein resides in the cell inner membrane. It catalyses the reaction fluoride(in) = fluoride(out). With respect to regulation, na(+) is not transported, but it plays an essential structural role and its presence is essential for fluoride channel function. Functionally, fluoride-specific ion channel. Important for reducing fluoride concentration in the cell, thus reducing its toxicity. This chain is Fluoride-specific ion channel FluC 2, found in Yersinia pseudotuberculosis serotype I (strain IP32953).